We begin with the raw amino-acid sequence, 436 residues long: Elongation factor 1-gamma-A (436 aa).

The GST N-terminal domain occupies 2–87 (AGGTLYTYPD…YVGNDELRGT (86 aa)). A GST C-terminal domain is found at 88–221 (TRLHQAQVIQ…KMAQFDAKKF (134 aa)). Composition is skewed to basic and acidic residues over residues 221–249 (FAEM…EKKK) and 265–278 (SEKA…SKDP). The tract at residues 221-278 (FAEMQPKKETPKKEKPAKEPKKEKEEKKKAAPTPAPAPEDDLDESEKALAAEPKSKDP) is disordered. The 162-residue stretch at 275 to 436 (SKDPYAHLPK…KPFNQGKIFK (162 aa)) folds into the EF-1-gamma C-terminal domain.

In terms of assembly, EF-1 is composed of four subunits: alpha, beta, delta, and gamma. In terms of processing, phosphorylated by CDK1. Post-translationally, the N-terminus is blocked.

Its function is as follows. Probably plays a role in anchoring the complex to other cellular components. This chain is Elongation factor 1-gamma-A (eef1g-a), found in Xenopus laevis (African clawed frog).